A 107-amino-acid polypeptide reads, in one-letter code: EPIDERMAL PATTERNING FACTOR-like protein 5 (107 aa).

The N-terminal stretch at M1–A22 is a signal peptide. 3 disulfide bridges follow: C64/C98, C68/C74, and C71/C100.

This sequence belongs to the plant cysteine rich small secretory peptide family. Epidermal patterning factor subfamily. In terms of assembly, interacts with ERECTA. Expressed asymetically in the hypocotyl, on the side proximal to the folded cotyledons at germination. Detected in developing flowers, the chalazal region of ovules and near the root apex, but not in inflorescence stems. Expressed in cotyledons, flowers, adult leaves and fruits.

The protein resides in the secreted. Its function is as follows. Controls stomatal patterning. Mediates differentiation of stomatal lineage cells to pavement cells and stomatal development inhibition. TMM (AC Q9SSD1) functions to dampen or block CLL1 signaling. Acts as a growth-regulatory ligand for ERECTA family receptors. Promotes fruit growth and fertility. The chain is EPIDERMAL PATTERNING FACTOR-like protein 5 from Arabidopsis thaliana (Mouse-ear cress).